We begin with the raw amino-acid sequence, 659 residues long: Exoribonuclease 2 (659 aa).

The 344-residue stretch at 189–532 folds into the RNB domain; that stretch reads RRDLTALHFV…NHRLIKACLA (344 aa). Positions 577–659 constitute an S1 motif domain; it reads NPEFRAEVQD…ETRSLIGNLV (83 aa).

Belongs to the RNR ribonuclease family. RNase II subfamily.

The protein localises to the cytoplasm. It carries out the reaction Exonucleolytic cleavage in the 3'- to 5'-direction to yield nucleoside 5'-phosphates.. Its function is as follows. Involved in mRNA degradation. Hydrolyzes single-stranded polyribonucleotides processively in the 3' to 5' direction. The polypeptide is Exoribonuclease 2 (Mannheimia succiniciproducens (strain KCTC 0769BP / MBEL55E)).